Here is a 612-residue protein sequence, read N- to C-terminus: Protein tipD (612 aa).

A disordered region spans residues 95–128 (RNEKKTQQQPPSGSSKMDSSSSSSSSNRVSGMGS). A compositionally biased stretch (low complexity) spans 106–128 (SGSSKMDSSSSSSSSNRVSGMGS). WD repeat units lie at residues 322–361 (GHNS…QKST), 364–403 (GASQ…SRHT), 406–444 (GHIG…CTRT), 447–486 (CFSS…PTQV), 490–530 (IHEG…TIRT), 535–576 (EYRN…TVKV), and 582–611 (NNGS…IIQW).

The protein belongs to the WD repeat tipD family.

Its function is as follows. Not known; disruption of the gene for tipD results in morphological defects. This is Protein tipD (tipD) from Dictyostelium discoideum (Social amoeba).